A 485-amino-acid polypeptide reads, in one-letter code: MSLRVYNTLSGTKEEFTPLVPGRVSMYVCGVTVYDHCHIGHARANVVFDMIYRYLRHAGYDVTYVRNYTDVDDKIINRANQEGVPYNAISERFIAEFDRDMAALGLDLPTHQPKATEHIAEMIDVISRLIEKGFAYAADGDVYFCVEKFDPYLKLSKRNLDEMQAGARIEVGEKKRHPMDFALWKGSKPGEPFWESPWGQGRPGWHIECSAMSMKYLGETFDIHGGGKDLVFPHHENEIAQSEAANGKPFAHYWIHNGFVNINSEKMSKSLGNFFTIKEVLEKYDAEVLRFFLLSAHYRSPIDFSDQNLREAEAGLERIYGTLAGIDENLTKGAEGTAEETDRELAEKAVTFPERFREAMDDDFNTAQALGFVFDLVRSANRVLGEGKGGGSNRALLAEARDRIRKVGAVLGIFTSEPRAFAERLKNRKAAELPITAEEIERLIAERIAARANRDFKRADEIRDSLAAKGIMLLDSPQGTTWKVK.

C29 serves as a coordination point for Zn(2+). The 'HIGH' region motif lies at V31–H41. Residues C209, H234, and E238 each contribute to the Zn(2+) site. Positions K266 to S270 match the 'KMSKS' region motif. K269 contacts ATP.

This sequence belongs to the class-I aminoacyl-tRNA synthetase family. As to quaternary structure, monomer. Zn(2+) serves as cofactor.

Its subcellular location is the cytoplasm. It catalyses the reaction tRNA(Cys) + L-cysteine + ATP = L-cysteinyl-tRNA(Cys) + AMP + diphosphate. This Geobacter metallireducens (strain ATCC 53774 / DSM 7210 / GS-15) protein is Cysteine--tRNA ligase.